A 101-amino-acid polypeptide reads, in one-letter code: Small ubiquitin-related modifier 5 (101 aa).

Residues 17–21 (IKDED) carry the Required for PML-NB formation motif. Residue Lys18 forms a Glycyl lysine isopeptide (Lys-Gly) (interchain with G-Cter in SUMO1P1/SUMO5) linkage. A Ubiquitin-like domain is found at 20–97 (EDIKLRVIGQ…IEVYQEQIGG (78 aa)). Gly97 participates in a covalent cross-link: Glycyl lysine isopeptide (Gly-Lys) (interchain with K-? in acceptor proteins). The propeptide occupies 98 to 101 (HSTV).

Belongs to the ubiquitin family. SUMO subfamily. Interacts with CBX4. Interacts with PIAS1. Found in a complex with SAE2. Interacts with UBE2I. Interacts with SP100. Interacts with HIPK2. Interacts with DAXX. Interacts with PML-RARA oncoprotein; PML-RARalpha outcompetes PML for SUMO1P1/SUMO5 conjugation. Cleavage of precursor form is necessary for function. Post-translationally, autosumoylated at Lys-18. In terms of tissue distribution, high expression levels in testes and peripheral blood leukocyte. Expressed also in lung, placenta, liver, spleen and thymus.

It is found in the nucleus. Functionally, ubiquitin-like protein that can be covalently attached to proteins as a monomer or as a lysine-linked polymer. Regulates the life cycle of promyelocytic leukemia nuclear bodies (PML-NBs). PolySUMO1P1/SUMO5 conjugation on 'Lys-160' of PML facilitates recruitment of PML-NB components, which enlarges PML-NB. SUMO1P1/SUMO5 also increases polySUMO2/3 conjugation of PML, resulting in RNF4-mediated disruption of PML-NBs. The chain is Small ubiquitin-related modifier 5 from Homo sapiens (Human).